Reading from the N-terminus, the 155-residue chain is Small ribosomal subunit protein uS7 (155 aa).

This sequence belongs to the universal ribosomal protein uS7 family. In terms of assembly, part of the 30S ribosomal subunit. Contacts proteins S9 and S11.

Functionally, one of the primary rRNA binding proteins, it binds directly to 16S rRNA where it nucleates assembly of the head domain of the 30S subunit. Is located at the subunit interface close to the decoding center, probably blocks exit of the E-site tRNA. This chain is Small ribosomal subunit protein uS7, found in Corynebacterium diphtheriae (strain ATCC 700971 / NCTC 13129 / Biotype gravis).